Here is a 270-residue protein sequence, read N- to C-terminus: Sulfur carrier protein FdhD (270 aa).

Basic and acidic residues-rich tracts occupy residues 1–10 and 20–30; these read MSMQDHDRTE and RHLDGSSRPDW. Positions 1-30 are disordered; sequence MSMQDHDRTEQGMTSLAVTRHLDGSSRPDW. The Cysteine persulfide intermediate role is filled by cysteine 117.

The protein belongs to the FdhD family.

It localises to the cytoplasm. Required for formate dehydrogenase (FDH) activity. Acts as a sulfur carrier protein that transfers sulfur from IscS to the molybdenum cofactor prior to its insertion into FDH. This is Sulfur carrier protein FdhD from Chromobacterium violaceum (strain ATCC 12472 / DSM 30191 / JCM 1249 / CCUG 213 / NBRC 12614 / NCIMB 9131 / NCTC 9757 / MK).